The following is an 864-amino-acid chain: 3-O-alpha-D-mannopyranosyl-alpha-D-mannopyranose xylosylphosphotransferase (864 aa).

The tract at residues 1–66 (MPSTALSPPS…VPPRSPSRKI (66 aa)) is disordered. Over 1 to 82 (MPSTALSPPS…HIRPHITPRT (82 aa)) the chain is Cytoplasmic. Low complexity-rich tracts occupy residues 16-29 (SYDS…PSSP) and 42-52 (SPSPSRLESLL). A helical membrane pass occupies residues 83 to 103 (LTPVFLWTLALWLIHHFLFPL). Over 104-864 (SSPFAKLAKP…WDPVKDRYND (761 aa)) the chain is Lumenal. Residues N200, N301, and N583 are each glycosylated (N-linked (GlcNAc...) asparagine).

It belongs to the XPT1 family. Requires Mn(2+) as cofactor.

The protein localises to the golgi apparatus membrane. The catalysed reaction is 3-alpha-D-mannopyranosyl-alpha-D-mannopyranose + UDP-alpha-D-xylose = 3-O-(6-O-alpha-D-xylosylphospho-alpha-D-mannopyranosyl)-alpha-D-mannopyranose + UMP + H(+). Xylosylphosphotransferase that is specific for UDP-xylose as a donor and mannose as an acceptor to form a xylose-alpha-1-phosphate-6-mannose linkage. Functions in the O-glycosylation of proteins en route through the secretory pathway. The chain is 3-O-alpha-D-mannopyranosyl-alpha-D-mannopyranose xylosylphosphotransferase (XPT1) from Cryptococcus neoformans var. grubii (Filobasidiella neoformans var. grubii).